A 480-amino-acid polypeptide reads, in one-letter code: uncharacterized protein (480 aa).

A DNA-binding region (zn(2)-C6 fungal-type) is located at residues 16 to 46 (CDRCRRRKIRCTGSDIPGQPCLACQKAHADC). Low complexity predominate over residues 298 to 307 (SFGASVSPKS). Positions 298–325 (SFGASVSPKSTPGSNSTGAAVDTNSVHS) are disordered. A compositionally biased stretch (polar residues) spans 308-325 (TPGSNSTGAAVDTNSVHS).

The protein resides in the cytoplasm. It is found in the nucleus. This is an uncharacterized protein from Schizosaccharomyces pombe (strain 972 / ATCC 24843) (Fission yeast).